The sequence spans 492 residues: Glutamate--tRNA ligase (492 aa).

The short motif at 13–23 (PSPTGTPHVGM) is the 'HIGH' region element. The short motif at 257-261 (KLSKR) is the 'KMSKS' region element. Lys-260 is an ATP binding site.

Belongs to the class-I aminoacyl-tRNA synthetase family. Glutamate--tRNA ligase type 1 subfamily. Monomer.

The protein localises to the cytoplasm. It catalyses the reaction tRNA(Glu) + L-glutamate + ATP = L-glutamyl-tRNA(Glu) + AMP + diphosphate. Functionally, catalyzes the attachment of glutamate to tRNA(Glu) in a two-step reaction: glutamate is first activated by ATP to form Glu-AMP and then transferred to the acceptor end of tRNA(Glu). This chain is Glutamate--tRNA ligase, found in Mycolicibacterium paratuberculosis (strain ATCC BAA-968 / K-10) (Mycobacterium paratuberculosis).